We begin with the raw amino-acid sequence, 337 residues long: Anthranilate phosphoribosyltransferase (337 aa).

Residues G80, 83-84 (GD), T88, 90-93 (NIST), 108-116 (KHGNRAVSS), and S120 contribute to the 5-phospho-alpha-D-ribose 1-diphosphate site. G80 is a binding site for anthranilate. A Mg(2+)-binding site is contributed by S92. N111 serves as a coordination point for anthranilate. R166 is an anthranilate binding site. Positions 224 and 225 each coordinate Mg(2+).

The protein belongs to the anthranilate phosphoribosyltransferase family. In terms of assembly, homodimer. Requires Mg(2+) as cofactor.

It carries out the reaction N-(5-phospho-beta-D-ribosyl)anthranilate + diphosphate = 5-phospho-alpha-D-ribose 1-diphosphate + anthranilate. It functions in the pathway amino-acid biosynthesis; L-tryptophan biosynthesis; L-tryptophan from chorismate: step 2/5. Functionally, catalyzes the transfer of the phosphoribosyl group of 5-phosphorylribose-1-pyrophosphate (PRPP) to anthranilate to yield N-(5'-phosphoribosyl)-anthranilate (PRA). The polypeptide is Anthranilate phosphoribosyltransferase (Anaeromyxobacter dehalogenans (strain 2CP-C)).